The sequence spans 363 residues: Probable aminomethyltransferase (363 aa).

Belongs to the GcvT family. In terms of assembly, the glycine cleavage system is composed of four proteins: P, T, L and H.

The catalysed reaction is N(6)-[(R)-S(8)-aminomethyldihydrolipoyl]-L-lysyl-[protein] + (6S)-5,6,7,8-tetrahydrofolate = N(6)-[(R)-dihydrolipoyl]-L-lysyl-[protein] + (6R)-5,10-methylene-5,6,7,8-tetrahydrofolate + NH4(+). Functionally, the glycine cleavage system catalyzes the degradation of glycine. This chain is Probable aminomethyltransferase, found in Halobacterium salinarum (strain ATCC 29341 / DSM 671 / R1).